Consider the following 123-residue polypeptide: WAP four-disulfide core domain protein 5 (123 aa).

A signal peptide spans M1 to G24. 2 consecutive WAP domains span residues K27–R73 and V74–V121. 8 cysteine pairs are disulfide-bonded: C34/C62, C41/C66, C49/C61, C55/C70, C81/C109, C88/C113, C96/C108, and C102/C117.

The protein resides in the secreted. Putative acid-stable proteinase inhibitor. The polypeptide is WAP four-disulfide core domain protein 5 (WFDC5) (Aotus nancymaae (Ma's night monkey)).